The sequence spans 440 residues: 3-phosphoshikimate 1-carboxyvinyltransferase (440 aa).

3-phosphoshikimate-binding residues include Lys31, Ser32, and Arg36. Lys31 provides a ligand contact to phosphoenolpyruvate. Gly104 and Arg133 together coordinate phosphoenolpyruvate. Residues Ser178, Gln180, Asp328, and Lys355 each coordinate 3-phosphoshikimate. Gln180 contributes to the phosphoenolpyruvate binding site. Catalysis depends on Asp328, which acts as the Proton acceptor. Phosphoenolpyruvate-binding residues include Arg359 and Arg401.

It belongs to the EPSP synthase family. Monomer.

It is found in the cytoplasm. It catalyses the reaction 3-phosphoshikimate + phosphoenolpyruvate = 5-O-(1-carboxyvinyl)-3-phosphoshikimate + phosphate. Its pathway is metabolic intermediate biosynthesis; chorismate biosynthesis; chorismate from D-erythrose 4-phosphate and phosphoenolpyruvate: step 6/7. Functionally, catalyzes the transfer of the enolpyruvyl moiety of phosphoenolpyruvate (PEP) to the 5-hydroxyl of shikimate-3-phosphate (S3P) to produce enolpyruvyl shikimate-3-phosphate and inorganic phosphate. This chain is 3-phosphoshikimate 1-carboxyvinyltransferase, found in Thermosynechococcus vestitus (strain NIES-2133 / IAM M-273 / BP-1).